The chain runs to 28 residues: leu operon leader peptide (28 aa).

In terms of biological role, involved in control of the biosynthesis of leucine. The chain is leu operon leader peptide (leuL) from Shigella flexneri.